A 303-amino-acid chain; its full sequence is Proteasome subunit beta (303 aa).

The propeptide at 1–67 (MTWQFPDRLS…SGGTGQLPHG (67 aa)) is removed in mature form; by autocatalysis. Threonine 68 acts as the Nucleophile in catalysis.

Belongs to the peptidase T1B family. In terms of assembly, the 20S proteasome core is composed of 14 alpha and 14 beta subunits that assemble into four stacked heptameric rings, resulting in a barrel-shaped structure. The two inner rings, each composed of seven catalytic beta subunits, are sandwiched by two outer rings, each composed of seven alpha subunits. The catalytic chamber with the active sites is on the inside of the barrel. Has a gated structure, the ends of the cylinder being occluded by the N-termini of the alpha-subunits. Is capped by the proteasome-associated ATPase, ARC.

It is found in the cytoplasm. The catalysed reaction is Cleavage of peptide bonds with very broad specificity.. Its pathway is protein degradation; proteasomal Pup-dependent pathway. The formation of the proteasomal ATPase ARC-20S proteasome complex, likely via the docking of the C-termini of ARC into the intersubunit pockets in the alpha-rings, may trigger opening of the gate for substrate entry. Interconversion between the open-gate and close-gate conformations leads to a dynamic regulation of the 20S proteasome proteolysis activity. Its function is as follows. Component of the proteasome core, a large protease complex with broad specificity involved in protein degradation. The protein is Proteasome subunit beta of Mycolicibacterium paratuberculosis (strain ATCC BAA-968 / K-10) (Mycobacterium paratuberculosis).